A 420-amino-acid chain; its full sequence is Glutamyl-tRNA reductase (420 aa).

Residues 49 to 52 (TCNR), S107, 112 to 114 (EPQ), and Q118 each bind substrate. The active-site Nucleophile is C50. 187–192 (GAGETI) provides a ligand contact to NADP(+).

This sequence belongs to the glutamyl-tRNA reductase family. In terms of assembly, homodimer.

It catalyses the reaction (S)-4-amino-5-oxopentanoate + tRNA(Glu) + NADP(+) = L-glutamyl-tRNA(Glu) + NADPH + H(+). It functions in the pathway porphyrin-containing compound metabolism; protoporphyrin-IX biosynthesis; 5-aminolevulinate from L-glutamyl-tRNA(Glu): step 1/2. In terms of biological role, catalyzes the NADPH-dependent reduction of glutamyl-tRNA(Glu) to glutamate 1-semialdehyde (GSA). The polypeptide is Glutamyl-tRNA reductase (Photobacterium profundum (strain SS9)).